A 179-amino-acid chain; its full sequence is Large ribosomal subunit protein uL6 (179 aa).

Belongs to the universal ribosomal protein uL6 family. As to quaternary structure, part of the 50S ribosomal subunit.

In terms of biological role, this protein binds to the 23S rRNA, and is important in its secondary structure. It is located near the subunit interface in the base of the L7/L12 stalk, and near the tRNA binding site of the peptidyltransferase center. This chain is Large ribosomal subunit protein uL6, found in Treponema pallidum (strain Nichols).